The sequence spans 256 residues: ATP synthase peripheral stalk subunit b, mitochondrial (256 aa).

A mitochondrion-targeting transit peptide spans M1–A42. At K131 the chain carries N6-succinyllysine. N6-acetyllysine occurs at positions 139, 154, 162, 221, 225, 233, and 244.

The protein belongs to the eukaryotic ATPase B chain family. As to quaternary structure, component of the ATP synthase complex composed at least of ATP5F1A/subunit alpha, ATP5F1B/subunit beta, ATP5MC1/subunit c (homooctomer), MT-ATP6/subunit a, MT-ATP8/subunit 8, ATP5ME/subunit e, ATP5MF/subunit f, ATP5MG/subunit g, ATP5MK/subunit k, ATP5MJ/subunit j, ATP5F1C/subunit gamma, ATP5F1D/subunit delta, ATP5F1E/subunit epsilon, ATP5PF/subunit F6, ATP5PB/subunit b, ATP5PD/subunit d, ATP5PO/subunit OSCP. ATP synthase complex consists of a soluble F(1) head domain (subunits alpha(3) and beta(3)) - the catalytic core - and a membrane F(0) domain - the membrane proton channel (subunits c, a, 8, e, f, g, k and j). These two domains are linked by a central stalk (subunits gamma, delta, and epsilon) rotating inside the F1 region and a stationary peripheral stalk (subunits F6, b, d, and OSCP).

The protein localises to the mitochondrion. Its subcellular location is the mitochondrion inner membrane. Its function is as follows. Subunit b, of the mitochondrial membrane ATP synthase complex (F(1)F(0) ATP synthase or Complex V) that produces ATP from ADP in the presence of a proton gradient across the membrane which is generated by electron transport complexes of the respiratory chain. ATP synthase complex consist of a soluble F(1) head domain - the catalytic core - and a membrane F(1) domain - the membrane proton channel. These two domains are linked by a central stalk rotating inside the F(1) region and a stationary peripheral stalk. During catalysis, ATP synthesis in the catalytic domain of F(1) is coupled via a rotary mechanism of the central stalk subunits to proton translocation. In vivo, can only synthesize ATP although its ATP hydrolase activity can be activated artificially in vitro. Part of the complex F(0) domain. Part of the complex F(0) domain and the peripheric stalk, which acts as a stator to hold the catalytic alpha(3)beta(3) subcomplex and subunit a/ATP6 static relative to the rotary elements. This chain is ATP synthase peripheral stalk subunit b, mitochondrial, found in Mus musculus (Mouse).